The sequence spans 308 residues: N-acetylneuraminate lyase (308 aa).

Aceneuramate contacts are provided by Thr-50 and Thr-51. The active-site Proton donor is the Tyr-142. Lys-172 acts as the Schiff-base intermediate with substrate in catalysis. Ser-174, Gly-198, Asp-200, Glu-201, and Ser-217 together coordinate aceneuramate.

This sequence belongs to the DapA family. NanA subfamily. As to quaternary structure, homotetramer.

It is found in the cytoplasm. The catalysed reaction is aceneuramate = aldehydo-N-acetyl-D-mannosamine + pyruvate. The protein operates within amino-sugar metabolism; N-acetylneuraminate degradation. In terms of biological role, catalyzes the cleavage of N-acetylneuraminic acid (sialic acid) to form pyruvate and N-acetylmannosamine via a Schiff base intermediate. It prevents sialic acids from being recycled and returning to the cell surface. Involved in the N-glycolylneuraminic acid (Neu5Gc) degradation pathway. The sequence is that of N-acetylneuraminate lyase from Gallus gallus (Chicken).